A 263-amino-acid polypeptide reads, in one-letter code: Small ribosomal subunit protein uS3 (263 aa).

One can recognise a KH type-2 domain in the interval 39–107 (VREYLKKKLK…PVHVNIEEIR (69 aa)). The disordered stretch occupies residues 211 to 263 (GELPPEAATPREEERRPRRAPRGDRPDGARTGRPGGRGRGPRKADAAPAPEGE). The segment covering 219–240 (TPREEERRPRRAPRGDRPDGAR) has biased composition (basic and acidic residues).

It belongs to the universal ribosomal protein uS3 family. In terms of assembly, part of the 30S ribosomal subunit. Forms a tight complex with proteins S10 and S14.

Binds the lower part of the 30S subunit head. Binds mRNA in the 70S ribosome, positioning it for translation. The chain is Small ribosomal subunit protein uS3 from Bordetella pertussis (strain Tohama I / ATCC BAA-589 / NCTC 13251).